A 689-amino-acid chain; its full sequence is Protein CFAP20DC (689 aa).

Disordered regions lie at residues 143-179 (GPPPLSGRRSNMRISSETVRSVGSKNNRSCQPSTVEK), 217-236 (LPIMHPHPPQEPSADKNNNR), 241-262 (LKSTSRERTETPSGNSSGNNTN), 333-424 (SKES…PSEL), and 583-660 (SIST…LSVE). Residues 150–176 (RRSNMRISSETVRSVGSKNNRSCQPST) show a composition bias toward polar residues. Positions 343 to 359 (EESQSVPKDIFTFSSRP) are enriched in polar residues. The segment covering 394 to 405 (SEDDFYGGDSSE) has biased composition (acidic residues). The span at 411 to 421 (IQGSRGPTTGP) shows a compositional bias: polar residues. Low complexity predominate over residues 583 to 593 (SISTSSDDTTT).

The sequence is that of Protein CFAP20DC (CFAP20DC) from Macaca fascicularis (Crab-eating macaque).